The sequence spans 258 residues: Type III pantothenate kinase (258 aa).

An ATP-binding site is contributed by 6-13 (DVGNTQIF). Residue 107–110 (GADR) coordinates substrate. Residue D109 is the Proton acceptor of the active site. D130 contacts K(+). ATP is bound at residue T133. T185 contributes to the substrate binding site.

The protein belongs to the type III pantothenate kinase family. In terms of assembly, homodimer. NH4(+) is required as a cofactor. Requires K(+) as cofactor.

It is found in the cytoplasm. The enzyme catalyses (R)-pantothenate + ATP = (R)-4'-phosphopantothenate + ADP + H(+). The protein operates within cofactor biosynthesis; coenzyme A biosynthesis; CoA from (R)-pantothenate: step 1/5. Functionally, catalyzes the phosphorylation of pantothenate (Pan), the first step in CoA biosynthesis. The chain is Type III pantothenate kinase from Elusimicrobium minutum (strain Pei191).